Reading from the N-terminus, the 465-residue chain is UPF0324 membrane protein CC_0425 (465 aa).

A disordered region spans residues histidine 97–arginine 132. Basic residues predominate over residues glutamine 115 to arginine 132. The next 10 membrane-spanning stretches (helical) occupy residues alanine 135 to valine 157, leucine 172 to leucine 194, alanine 219 to alanine 241, leucine 251 to serine 273, threonine 286 to alanine 308, alanine 318 to serine 340, leucine 352 to glutamine 374, isoleucine 378 to leucine 400, proline 405 to serine 427, and leucine 442 to phenylalanine 464.

The protein belongs to the UPF0324 family.

Its subcellular location is the cell membrane. The chain is UPF0324 membrane protein CC_0425 from Caulobacter vibrioides (strain ATCC 19089 / CIP 103742 / CB 15) (Caulobacter crescentus).